A 496-amino-acid polypeptide reads, in one-letter code: Probable fatty acyl-CoA reductase 5 (496 aa).

Belongs to the fatty acyl-CoA reductase family. As to expression, expressed in the endodermal cell layer surrounding the central vasculature in roots. Expressed in floral organs of very young unopened buds and receptacle of siliques.

It catalyses the reaction a long-chain fatty acyl-CoA + 2 NADPH + 2 H(+) = a long-chain primary fatty alcohol + 2 NADP(+) + CoA. In terms of biological role, catalyzes the reduction of fatty acyl-CoA to fatty alcohols. Catalyzes specifically the formation of C18:0 fatty alcohol. Provides the fatty alcohols required for synthesis of suberin in roots, seed coat and wound-induced leaf tissue. Provides the fatty alcohols required for synthesis of alkyl hydroxycinnamates in root waxes. This Arabidopsis thaliana (Mouse-ear cress) protein is Probable fatty acyl-CoA reductase 5.